A 650-amino-acid chain; its full sequence is DNA gyrase subunit B (650 aa).

Over residues 400 to 414 (RRSQEARELTRRKSP) the composition is skewed to basic and acidic residues. The interval 400-422 (RRSQEARELTRRKSPFDSGSLPG) is disordered. The 115-residue stretch at 435-549 (SELYIVEGDS…QGNIYIAQPP (115 aa)) folds into the Toprim domain. Residues E441, D514, and D516 each coordinate Mg(2+).

This sequence belongs to the type II topoisomerase GyrB family. As to quaternary structure, heterotetramer, composed of two GyrA and two GyrB chains. In the heterotetramer, GyrA contains the active site tyrosine that forms a transient covalent intermediate with DNA, while GyrB binds cofactors and catalyzes ATP hydrolysis. Requires Mg(2+) as cofactor. The cofactor is Mn(2+). It depends on Ca(2+) as a cofactor.

It localises to the cytoplasm. The enzyme catalyses ATP-dependent breakage, passage and rejoining of double-stranded DNA.. In terms of biological role, a type II topoisomerase that negatively supercoils closed circular double-stranded (ds) DNA in an ATP-dependent manner to modulate DNA topology and maintain chromosomes in an underwound state. Negative supercoiling favors strand separation, and DNA replication, transcription, recombination and repair, all of which involve strand separation. Also able to catalyze the interconversion of other topological isomers of dsDNA rings, including catenanes and knotted rings. Type II topoisomerases break and join 2 DNA strands simultaneously in an ATP-dependent manner. In Mycoplasma pneumoniae (strain ATCC 29342 / M129 / Subtype 1) (Mycoplasmoides pneumoniae), this protein is DNA gyrase subunit B.